The following is a 41-amino-acid chain: Photosystem I reaction center subunit IX (41 aa).

A helical transmembrane segment spans residues 7 to 27; that stretch reads YLSTAPVLATVWMIITAGILI.

This sequence belongs to the PsaJ family.

It localises to the cellular thylakoid membrane. May help in the organization of the PsaE and PsaF subunits. This is Photosystem I reaction center subunit IX from Trichodesmium erythraeum (strain IMS101).